Here is a 576-residue protein sequence, read N- to C-terminus: NADH-quinone oxidoreductase subunit C/D (576 aa).

Residues 1-176 (MAWISLEKAK…NLEGLFNYDR (176 aa)) form an NADH dehydrogenase I subunit C region. Residues 200–576 (SQIVLNWGPL…IDPVVGETDR (377 aa)) form an NADH dehydrogenase I subunit D region.

This sequence in the N-terminal section; belongs to the complex I 30 kDa subunit family. The protein in the C-terminal section; belongs to the complex I 49 kDa subunit family. In terms of assembly, NDH-1 is composed of 13 different subunits. Subunits NuoB, CD, E, F, and G constitute the peripheral sector of the complex.

Its subcellular location is the cell inner membrane. It carries out the reaction a quinone + NADH + 5 H(+)(in) = a quinol + NAD(+) + 4 H(+)(out). Its function is as follows. NDH-1 shuttles electrons from NADH, via FMN and iron-sulfur (Fe-S) centers, to quinones in the respiratory chain. The immediate electron acceptor for the enzyme in this species is believed to be ubiquinone. Couples the redox reaction to proton translocation (for every two electrons transferred, four hydrogen ions are translocated across the cytoplasmic membrane), and thus conserves the redox energy in a proton gradient. In Sulfurihydrogenibium sp. (strain YO3AOP1), this protein is NADH-quinone oxidoreductase subunit C/D.